Reading from the N-terminus, the 165-residue chain is Large ribosomal subunit protein mL49 (165 aa).

Residues 42-75 are compositionally biased toward low complexity; that stretch reads TTATTTTPLQQQQQQQPTTQPTTPIQTQTGAAPT. A disordered region spans residues 42-81; sequence TTATTTTPLQQQQQQQPTTQPTTPIQTQTGAAPTESTKPV.

This sequence belongs to the mitochondrion-specific ribosomal protein mL49 family. As to quaternary structure, component of the mitochondrial large ribosomal subunit (mt-LSU). Mature N.crassa 74S mitochondrial ribosomes consist of a small (37S) and a large (54S) subunit. The 37S small subunit contains a 16S ribosomal RNA (16S mt-rRNA) and 32 different proteins. The 54S large subunit contains a 23S rRNA (23S mt-rRNA) and 42 different proteins.

The protein localises to the mitochondrion. Functionally, component of the mitochondrial ribosome (mitoribosome), a dedicated translation machinery responsible for the synthesis of mitochondrial genome-encoded proteins, including at least some of the essential transmembrane subunits of the mitochondrial respiratory chain. The mitoribosomes are attached to the mitochondrial inner membrane and translation products are cotranslationally integrated into the membrane. In Neurospora crassa (strain ATCC 24698 / 74-OR23-1A / CBS 708.71 / DSM 1257 / FGSC 987), this protein is Large ribosomal subunit protein mL49 (img2).